A 497-amino-acid polypeptide reads, in one-letter code: Mechanosensitive ion channel protein 1, mitochondrial (497 aa).

Residues 1 to 86 (MAGVRLSLLK…RAFSSKSDDF (86 aa)) constitute a mitochondrion transit peptide. Transmembrane regions (helical) follow at residues 152-172 (DVIV…VVMP), 216-236 (LVTF…TIAA), 238-258 (YFSP…LYRW), 280-300 (VLTL…MASA), and 305-325 (VAVQ…AFAA).

It belongs to the MscS (TC 1.A.23) family.

Its subcellular location is the mitochondrion membrane. Its function is as follows. Mechanosensitive channel that opens in response to stretch forces in the membrane lipid bilayer. The sequence is that of Mechanosensitive ion channel protein 1, mitochondrial (MSL1) from Arabidopsis thaliana (Mouse-ear cress).